Consider the following 745-residue polypeptide: Phosphoribosylformylglycinamidine synthase subunit PurL (745 aa).

His-47 is a catalytic residue. ATP-binding residues include Tyr-50 and Lys-90. Glu-92 contacts Mg(2+). Substrate contacts are provided by residues 93–96 (SHNH) and Arg-115. His-94 (proton acceptor) is an active-site residue. Residue Asp-116 participates in Mg(2+) binding. Gln-240 contributes to the substrate binding site. A Mg(2+)-binding site is contributed by Asp-268. 312–314 (ESQ) contacts substrate. Residues Asn-501 and Gly-538 each contribute to the ATP site. Asn-539 serves as a coordination point for Mg(2+). Ser-541 provides a ligand contact to substrate.

The protein belongs to the FGAMS family. As to quaternary structure, monomer. Part of the FGAM synthase complex composed of 1 PurL, 1 PurQ and 2 PurS subunits.

The protein resides in the cytoplasm. It catalyses the reaction N(2)-formyl-N(1)-(5-phospho-beta-D-ribosyl)glycinamide + L-glutamine + ATP + H2O = 2-formamido-N(1)-(5-O-phospho-beta-D-ribosyl)acetamidine + L-glutamate + ADP + phosphate + H(+). It functions in the pathway purine metabolism; IMP biosynthesis via de novo pathway; 5-amino-1-(5-phospho-D-ribosyl)imidazole from N(2)-formyl-N(1)-(5-phospho-D-ribosyl)glycinamide: step 1/2. Functionally, part of the phosphoribosylformylglycinamidine synthase complex involved in the purines biosynthetic pathway. Catalyzes the ATP-dependent conversion of formylglycinamide ribonucleotide (FGAR) and glutamine to yield formylglycinamidine ribonucleotide (FGAM) and glutamate. The FGAM synthase complex is composed of three subunits. PurQ produces an ammonia molecule by converting glutamine to glutamate. PurL transfers the ammonia molecule to FGAR to form FGAM in an ATP-dependent manner. PurS interacts with PurQ and PurL and is thought to assist in the transfer of the ammonia molecule from PurQ to PurL. The protein is Phosphoribosylformylglycinamidine synthase subunit PurL of Leptospira interrogans serogroup Icterohaemorrhagiae serovar copenhageni (strain Fiocruz L1-130).